A 372-amino-acid chain; its full sequence is Carbamoyl phosphate synthase small chain (372 aa).

The segment at 1–182 (MTLYCKRGYK…PKAPIVHLGN (182 aa)) is CPSase. L-glutamine contacts are provided by serine 53, glycine 234, and glycine 236. One can recognise a Glutamine amidotransferase type-1 domain in the interval 186-372 (TIVVVDCGVK…KFKKMVSRNA (187 aa)). The active-site Nucleophile is cysteine 262. Residues leucine 263, glutamine 266, asparagine 304, glycine 306, and tyrosine 307 each contribute to the L-glutamine site. Active-site residues include histidine 347 and glutamate 349.

This sequence belongs to the CarA family. In terms of assembly, composed of two chains; the small (or glutamine) chain promotes the hydrolysis of glutamine to ammonia, which is used by the large (or ammonia) chain to synthesize carbamoyl phosphate. Tetramer of heterodimers (alpha,beta)4.

It carries out the reaction hydrogencarbonate + L-glutamine + 2 ATP + H2O = carbamoyl phosphate + L-glutamate + 2 ADP + phosphate + 2 H(+). The enzyme catalyses L-glutamine + H2O = L-glutamate + NH4(+). Its pathway is amino-acid biosynthesis; L-arginine biosynthesis; carbamoyl phosphate from bicarbonate: step 1/1. It functions in the pathway pyrimidine metabolism; UMP biosynthesis via de novo pathway; (S)-dihydroorotate from bicarbonate: step 1/3. Functionally, small subunit of the glutamine-dependent carbamoyl phosphate synthetase (CPSase). CPSase catalyzes the formation of carbamoyl phosphate from the ammonia moiety of glutamine, carbonate, and phosphate donated by ATP, constituting the first step of 2 biosynthetic pathways, one leading to arginine and/or urea and the other to pyrimidine nucleotides. The small subunit (glutamine amidotransferase) binds and cleaves glutamine to supply the large subunit with the substrate ammonia. In Sulfurisphaera tokodaii (strain DSM 16993 / JCM 10545 / NBRC 100140 / 7) (Sulfolobus tokodaii), this protein is Carbamoyl phosphate synthase small chain.